The chain runs to 857 residues: Glucans biosynthesis glucosyltransferase H (857 aa).

Helical transmembrane passes span 141-158, 197-219, 514-536, 570-592, 605-627, and 681-703; these read YILLALMIGQTIVAGWYM, LILFGILFCWVSAGFWTALMGFL, AVFLTGVMSYLSAPLWFLFLVLS, VALFSTTIVLLFLPKLLSVILIW, VTLSMLMEMLFSMLLAPVRMIFH, and SFLWWLAPIVGSLVLSIPVSVIS.

Belongs to the glycosyltransferase 2 family. OpgH subfamily.

It is found in the cell inner membrane. It participates in glycan metabolism; osmoregulated periplasmic glucan (OPG) biosynthesis. Functionally, involved in the biosynthesis of osmoregulated periplasmic glucans (OPGs). This chain is Glucans biosynthesis glucosyltransferase H, found in Pseudomonas putida (strain ATCC 47054 / DSM 6125 / CFBP 8728 / NCIMB 11950 / KT2440).